A 467-amino-acid polypeptide reads, in one-letter code: Asparagine--tRNA ligase (467 aa).

Belongs to the class-II aminoacyl-tRNA synthetase family. As to quaternary structure, homodimer.

Its subcellular location is the cytoplasm. The catalysed reaction is tRNA(Asn) + L-asparagine + ATP = L-asparaginyl-tRNA(Asn) + AMP + diphosphate + H(+). The chain is Asparagine--tRNA ligase from Glaesserella parasuis serovar 5 (strain SH0165) (Haemophilus parasuis).